We begin with the raw amino-acid sequence, 261 residues long: Proteasome subunit alpha type-4 (261 aa).

A phosphoserine mark is found at Ser-13 and Ser-75. Lys-127 bears the N6-acetyllysine mark. A Phosphoserine modification is found at Ser-173. Lys-176 bears the N6-acetyllysine mark. The segment at 240–261 (HEEEEAKAEREKKEKEQREKDK) is disordered.

It belongs to the peptidase T1A family. The 26S proteasome consists of a 20S proteasome core and two 19S regulatory subunits. The 20S proteasome core is a barrel-shaped complex made of 28 subunits that are arranged in four stacked rings. The two outer rings are each formed by seven alpha subunits, and the two inner rings are formed by seven beta subunits. The proteolytic activity is exerted by three beta-subunits PSMB5, PSMB6 and PSMB7. Ubiquitous.

The protein localises to the cytoplasm. It is found in the nucleus. Functionally, component of the 20S core proteasome complex involved in the proteolytic degradation of most intracellular proteins. This complex plays numerous essential roles within the cell by associating with different regulatory particles. Associated with two 19S regulatory particles, forms the 26S proteasome and thus participates in the ATP-dependent degradation of ubiquitinated proteins. The 26S proteasome plays a key role in the maintenance of protein homeostasis by removing misfolded or damaged proteins that could impair cellular functions, and by removing proteins whose functions are no longer required. Associated with the PA200 or PA28, the 20S proteasome mediates ubiquitin-independent protein degradation. This type of proteolysis is required in several pathways including spermatogenesis (20S-PA200 complex) or generation of a subset of MHC class I-presented antigenic peptides (20S-PA28 complex). This Rattus norvegicus (Rat) protein is Proteasome subunit alpha type-4 (Psma4).